A 315-amino-acid polypeptide reads, in one-letter code: Porphobilinogen deaminase (315 aa).

Position 251 is an S-(dipyrrolylmethanemethyl)cysteine (cysteine 251).

It belongs to the HMBS family. As to quaternary structure, monomer. Requires dipyrromethane as cofactor.

The catalysed reaction is 4 porphobilinogen + H2O = hydroxymethylbilane + 4 NH4(+). Its pathway is porphyrin-containing compound metabolism; protoporphyrin-IX biosynthesis; coproporphyrinogen-III from 5-aminolevulinate: step 2/4. Functionally, tetrapolymerization of the monopyrrole PBG into the hydroxymethylbilane pre-uroporphyrinogen in several discrete steps. The sequence is that of Porphobilinogen deaminase from Sphingopyxis alaskensis (strain DSM 13593 / LMG 18877 / RB2256) (Sphingomonas alaskensis).